Consider the following 177-residue polypeptide: Protein CutA 1, chloroplastic (177 aa).

Residues 1-60 (MPLLPSPLGSLSAAATAAPRRAAAAAGLSPLLLRRRAPIAGALLFLSLGAFAGVRSLSSS) constitute a chloroplast transit peptide.

Belongs to the CutA family. In terms of assembly, homotrimer.

It is found in the plastid. The protein localises to the chloroplast. The protein is Protein CutA 1, chloroplastic (CUTA1) of Oryza sativa subsp. japonica (Rice).